The sequence spans 610 residues: Propanediol dehydratase-reactivating factor large subunit (610 aa).

11–13 (NSS) is an ATP binding site. T105, D166, and D183 together coordinate Mg(2+). Residues 459–462 (EEIK), 557–558 (GS), and R591 each bind ATP.

It belongs to the DdrA/PduG family. In terms of assembly, forms a heterotetramer PduG(2)/PduH(2). Requires Mg(2+) as cofactor.

Its subcellular location is the bacterial microcompartment. The enzyme catalyses ATP + H2O = ADP + phosphate + H(+). It participates in polyol metabolism; 1,2-propanediol degradation. In terms of biological role, large subunit of the propanediol dehydratase-reactivating factor (DDR), which reactivates suicidally inhibited adenosylcobalamin-dependent propanediol dehydratase (diol dehydratase, DDH) found in the bacterial microcompartment (BMC) dedicated to 1,2-propanediol (1,2-PD) degradation. Reactivates inactivated DDH in the presence of ATP, Mg(2+) and free adenosylcobalamin (AdoCbl), by mediating the exchange of the tightly bound damaged cofactor AdoCbl for a free intact one. This subunit contains the adenosine nucleotide binding site. Its function is as follows. The 1,2-PD-specific bacterial microcompartment (BMC) concentrates low levels of 1,2-PD catabolic enzymes, concentrates volatile reaction intermediates thus enhancing pathway flux and keeps the level of toxic, mutagenic propionaldehyde low. This chain is Propanediol dehydratase-reactivating factor large subunit, found in Salmonella typhimurium (strain LT2 / SGSC1412 / ATCC 700720).